The chain runs to 162 residues: Cyclic pyranopterin monophosphate synthase (162 aa).

Residues 75-77 (LCH) and 113-114 (ME) each bind substrate. Asp128 is a catalytic residue.

The protein belongs to the MoaC family. As to quaternary structure, homohexamer; trimer of dimers.

It carries out the reaction (8S)-3',8-cyclo-7,8-dihydroguanosine 5'-triphosphate = cyclic pyranopterin phosphate + diphosphate. The protein operates within cofactor biosynthesis; molybdopterin biosynthesis. In terms of biological role, catalyzes the conversion of (8S)-3',8-cyclo-7,8-dihydroguanosine 5'-triphosphate to cyclic pyranopterin monophosphate (cPMP). The sequence is that of Cyclic pyranopterin monophosphate synthase from Burkholderia cenocepacia (strain HI2424).